Reading from the N-terminus, the 72-residue chain is Cytochrome c oxidase subunit 2 (72 aa).

Residues 1-14 (MAHPSQLGFQDAAS) are Mitochondrial intermembrane-facing. Residues 15 to 45 (PVMEELLHFHDHALMIVFLISTLVLYIIVAM) form a helical membrane-spanning segment. At 46–72 (VSTKLTNKHILDSQEVEIVWTILPAVI) the chain is on the mitochondrial matrix side.

This sequence belongs to the cytochrome c oxidase subunit 2 family. As to quaternary structure, component of the cytochrome c oxidase (complex IV, CIV), a multisubunit enzyme composed of 14 subunits. The complex is composed of a catalytic core of 3 subunits MT-CO1, MT-CO2 and MT-CO3, encoded in the mitochondrial DNA, and 11 supernumerary subunits COX4I, COX5A, COX5B, COX6A, COX6B, COX6C, COX7A, COX7B, COX7C, COX8 and NDUFA4, which are encoded in the nuclear genome. The complex exists as a monomer or a dimer and forms supercomplexes (SCs) in the inner mitochondrial membrane with NADH-ubiquinone oxidoreductase (complex I, CI) and ubiquinol-cytochrome c oxidoreductase (cytochrome b-c1 complex, complex III, CIII), resulting in different assemblies (supercomplex SCI(1)III(2)IV(1) and megacomplex MCI(2)III(2)IV(2)). Found in a complex with TMEM177, COA6, COX18, COX20, SCO1 and SCO2. Interacts with TMEM177 in a COX20-dependent manner. Interacts with COX20. Interacts with COX16. Cu cation is required as a cofactor.

Its subcellular location is the mitochondrion inner membrane. It carries out the reaction 4 Fe(II)-[cytochrome c] + O2 + 8 H(+)(in) = 4 Fe(III)-[cytochrome c] + 2 H2O + 4 H(+)(out). Functionally, component of the cytochrome c oxidase, the last enzyme in the mitochondrial electron transport chain which drives oxidative phosphorylation. The respiratory chain contains 3 multisubunit complexes succinate dehydrogenase (complex II, CII), ubiquinol-cytochrome c oxidoreductase (cytochrome b-c1 complex, complex III, CIII) and cytochrome c oxidase (complex IV, CIV), that cooperate to transfer electrons derived from NADH and succinate to molecular oxygen, creating an electrochemical gradient over the inner membrane that drives transmembrane transport and the ATP synthase. Cytochrome c oxidase is the component of the respiratory chain that catalyzes the reduction of oxygen to water. Electrons originating from reduced cytochrome c in the intermembrane space (IMS) are transferred via the dinuclear copper A center (CU(A)) of subunit 2 and heme A of subunit 1 to the active site in subunit 1, a binuclear center (BNC) formed by heme A3 and copper B (CU(B)). The BNC reduces molecular oxygen to 2 water molecules using 4 electrons from cytochrome c in the IMS and 4 protons from the mitochondrial matrix. The chain is Cytochrome c oxidase subunit 2 (mt-co2) from Atractosteus spatula (Alligator gar).